The sequence spans 472 residues: Tubulin gamma chain (472 aa).

A GTP-binding site is contributed by 142-148; it reads AGGTGSG.

It belongs to the tubulin family. In terms of assembly, component of the gamma-tubulin small complex (gamma-TuSC) composed of tubulin gamma chain, gamma-tubulin complex protein 2 (GCP2) and gamma-tubulin complex protein 3 (GCP3). Interacts with GCP2 and GCP3. Interacts with EB1.

The protein localises to the cytoplasm. Its subcellular location is the cytoskeleton. It is found in the flagellum axoneme. It localises to the flagellum basal body. The protein resides in the spindle. The protein localises to the microtubule organizing center. Its function is as follows. Tubulin is the major constituent of microtubules (Potential). The gamma chain is found at microtubule organizing centers (MTOC) such as the centrosome. Component of the gamma-tubulin small complex (gamma-TuSC) involved in microtubule nucleation for the formation of median bodies and in the biogenesis of flagella. Gamma-TuSC may be required for the correct positioning of EB1 within the trophozoites. In Giardia intestinalis (strain ATCC 50803 / WB clone C6) (Giardia lamblia), this protein is Tubulin gamma chain.